The primary structure comprises 132 residues: Small ribosomal subunit protein uS8 (132 aa).

Belongs to the universal ribosomal protein uS8 family. In terms of assembly, part of the 30S ribosomal subunit. Contacts proteins S5 and S12.

Its function is as follows. One of the primary rRNA binding proteins, it binds directly to 16S rRNA central domain where it helps coordinate assembly of the platform of the 30S subunit. The sequence is that of Small ribosomal subunit protein uS8 from Clostridium botulinum (strain Alaska E43 / Type E3).